Here is a 306-residue protein sequence, read N- to C-terminus: MAEKVAVLLGGTSAEREVSLLSGQAVLAGLREAGIDAHPVDTKDFPVTQLKEAGFEKVFIALHGRGGEDGTLQGVLEFLQLPYTGSGVMASALSMDKLRTKQVWQGIGLTVSPYVSINSQQVERLTDSQLQEYVADLGLPLIVKPSLEGSSVGMTKVNEISELRGALEAAFRYDVDLLVEKWLHGPEYTVAILGDTALPSIRIQPAAVFYDYDAKYWSEETQYFCPSGLSDEKEQQLAELALKAYQSVGCSGWGRVDVMMDTDGDFYLLEVNTSPGMTSHSLVPMAARQAGLSFSQLVVKILELAD.

The ATP-grasp domain maps to 101-303 (KQVWQGIGLT…FSQLVVKILE (203 aa)). 134-189 (VADLGLPLIVKPSLEGSSVGMTKVNEISELRGALEAAFRYDVDLLVEKWLHGPEYT) contributes to the ATP binding site. Mg(2+)-binding residues include D257, E270, and N272.

Belongs to the D-alanine--D-alanine ligase family. Mg(2+) is required as a cofactor. Requires Mn(2+) as cofactor.

The protein resides in the cytoplasm. It carries out the reaction 2 D-alanine + ATP = D-alanyl-D-alanine + ADP + phosphate + H(+). Its pathway is cell wall biogenesis; peptidoglycan biosynthesis. Cell wall formation. The protein is D-alanine--D-alanine ligase of Photorhabdus laumondii subsp. laumondii (strain DSM 15139 / CIP 105565 / TT01) (Photorhabdus luminescens subsp. laumondii).